The chain runs to 143 residues: Ribonuclease H (143 aa).

The RNase H type-1 domain maps to 1–136; the sequence is MQEIEIFCDG…CDSLAKLEAQ (136 aa). Residues Asp9, Glu47, Asp69, and Asp128 each contribute to the Mg(2+) site.

This sequence belongs to the RNase H family. In terms of assembly, monomer. Mg(2+) is required as a cofactor.

It localises to the cytoplasm. It carries out the reaction Endonucleolytic cleavage to 5'-phosphomonoester.. In terms of biological role, endonuclease that specifically degrades the RNA of RNA-DNA hybrids. This Helicobacter acinonychis (strain Sheeba) protein is Ribonuclease H.